The sequence spans 350 residues: HTH-type DNA-binding transcriptional activator EutR (350 aa).

Residues 243–344 enclose the HTH araC/xylS-type domain; it reads SRAREYVLEN…AEKPSLTLHQ (102 aa). 2 DNA-binding regions (H-T-H motif) span residues 260 to 281 and 311 to 334; these read LDLC…HAIL and VKDA…QQLF.

Its pathway is amine and polyamine degradation; ethanolamine degradation. Functionally, activates the transcription of the eut operon, allowing utilization of ethanolamine (EA). Positively regulates its own transcription. Probably binds EA and vitamin B12 as effectors. Competes with ethanolamine ammonia-lysase (EAL, the first enzyme in the EA degradation pathway) for adenosylcobalamin. Ethanolamine-associated signaling mediated via this protein, but not EA degradation, impacts S.typhimurium survival within macrophages. Binds the promoter of ssrB and eutS in vitro; in mouse infection models binding to ssrB probably induces all 4 operons of pathogenicity island SPI-2. Expression of the eut operon allows this bacteria to use ethanolamine (EA) as a carbon, nitrogen and energy source. It relies on cobalamin (vitamin B12) both as a cofactor for the ethanolamine ammonia-lyase (EAL) activity and to induce the operon. EA enhances bacterial survival in macrophages in a concentration-dependent manner, suggesting it is an important nutrient in infection. The sequence is that of HTH-type DNA-binding transcriptional activator EutR from Salmonella typhimurium (strain LT2 / SGSC1412 / ATCC 700720).